Reading from the N-terminus, the 563-residue chain is Ataxin-10 homolog (563 aa).

The residue at position 433 (T433) is a Phosphothreonine. Positions 544–563 (VSKEEDPGNENSEIISIDED) are disordered. S559 is modified (phosphoserine).

It belongs to the ataxin-10 family.

The protein resides in the cytoplasm. Functionally, may play a role in the regulation of cytokinesis. The polypeptide is Ataxin-10 homolog (CTR86) (Saccharomyces cerevisiae (strain ATCC 204508 / S288c) (Baker's yeast)).